The primary structure comprises 453 residues: Serine/threonine-protein phosphatase 2A 55 kDa regulatory subunit B delta isoform (453 aa).

4 WD repeats span residues 32–71, 97–138, 181–219, and 230–270; these read AEAD…KGRA, EIEE…KRAE, AHTY…RSFN, and ELTE…LCDR. Ser285 carries the post-translational modification Phosphoserine. WD repeat units lie at residues 289-327, 344-385, and 420-452; these read EIIS…RPVE, ENDC…DVTL, and DFNK…QDKI. Phosphotyrosine is present on Tyr305. Thr308 is modified (phosphothreonine).

The protein belongs to the phosphatase 2A regulatory subunit B family. PP2A consists of a common heterodimeric core enzyme, composed of a 36 kDa catalytic subunit (subunit C) and a 65 kDa constant regulatory subunit (PR65 or subunit A), that associates with a variety of regulatory subunits. Proteins that associate with the core dimer include three families of regulatory subunits B (the R2/B/PR55/B55, R3/B''/PR72/PR130/PR59 and R5/B'/B56 families), the 48 kDa variable regulatory subunit, viral proteins, and cell signaling molecules. Interacts with IER5.

It localises to the cytoplasm. Its function is as follows. Substrate-recognition subunit of protein phosphatase 2A (PP2A) that plays a key role in cell cycle by controlling mitosis entry and exit. Involved in chromosome clustering during late mitosis by mediating dephosphorylation of MKI67. The activity of PP2A complexes containing PPP2R2D (PR55-delta) fluctuate during the cell cycle: the activity is high in interphase and low in mitosis. The protein is Serine/threonine-protein phosphatase 2A 55 kDa regulatory subunit B delta isoform of Mus musculus (Mouse).